Reading from the N-terminus, the 149-residue chain is Transcriptional repressor NrdR (149 aa).

A zinc finger spans residues 3–34; sequence CPFCSEQETKVIDSRLVAEGQQVRRRRECMVC. The ATP-cone domain occupies 49–139; the sequence is PRVIKRDGSR…VYRSFEDIRE (91 aa).

This sequence belongs to the NrdR family. Zn(2+) is required as a cofactor.

In terms of biological role, negatively regulates transcription of bacterial ribonucleotide reductase nrd genes and operons by binding to NrdR-boxes. This chain is Transcriptional repressor NrdR, found in Alteromonas mediterranea (strain DSM 17117 / CIP 110805 / LMG 28347 / Deep ecotype).